The sequence spans 88 residues: Apolipoprotein C-I (88 aa).

An N-terminal signal peptide occupies residues 1–26 (MRLLISLPVLIVVLAMALEGPAPAQA).

It belongs to the apolipoprotein C1 family.

The protein localises to the secreted. Its function is as follows. Inhibitor of lipoprotein binding to the low density lipoprotein (LDL) receptor, LDL receptor-related protein, and very low density lipoprotein (VLDL) receptor. Associates with high density lipoproteins (HDL) and the triacylglycerol-rich lipoproteins in the plasma and makes up about 10% of the protein of the VLDL and 2% of that of HDL. Appears to interfere directly with fatty acid uptake and is also the major plasma inhibitor of cholesteryl ester transfer protein (CETP). Modulates the interaction of APOE with beta-migrating VLDL and inhibits binding of beta-VLDL to the LDL receptor-related protein. Binds free fatty acids and reduces their intracellular esterification. This is Apolipoprotein C-I (APOC1) from Mesocricetus auratus (Golden hamster).